The sequence spans 100 residues: Small ribosomal subunit protein uS14c (100 aa).

The protein belongs to the universal ribosomal protein uS14 family. Part of the 30S ribosomal subunit.

The protein resides in the plastid. It localises to the chloroplast. Functionally, binds 16S rRNA, required for the assembly of 30S particles. The chain is Small ribosomal subunit protein uS14c from Angiopteris evecta (Mule's foot fern).